The chain runs to 78 residues: Small ribosomal subunit protein bS21A (78 aa).

Positions 30–52 are enriched in basic and acidic residues; it reads MKARSAYEKPSEKRAREKGEAVR. The tract at residues 30–78 is disordered; that stretch reads MKARSAYEKPSEKRAREKGEAVRRQRKLARKKLQREGLLPAPKKAVRAR. Basic residues predominate over residues 53 to 62; sequence RQRKLARKKL.

The protein belongs to the bacterial ribosomal protein bS21 family.

In Rhizobium etli (strain ATCC 51251 / DSM 11541 / JCM 21823 / NBRC 15573 / CFN 42), this protein is Small ribosomal subunit protein bS21A.